Here is a 464-residue protein sequence, read N- to C-terminus: Forkhead box protein N3 (464 aa).

2 disordered regions span residues methionine 1 to glycine 53 and proline 85 to glutamine 108. Residues threonine 14 to asparagine 30 show a composition bias toward polar residues. A DNA-binding region (fork-head) is located at residues lysine 113–proline 209. Disordered regions lie at residues methionine 294 to alanine 337 and leucine 381 to alanine 428. The segment covering serine 316–serine 336 has biased composition (low complexity). Positions glutamine 389–arginine 401 are enriched in basic residues.

The protein resides in the nucleus. Functionally, acts as a transcriptional repressor. May be involved in DNA damage-inducible cell cycle arrests (checkpoints). The chain is Forkhead box protein N3 from Xenopus tropicalis (Western clawed frog).